The primary structure comprises 149 residues: Transcriptional repressor NrdR (149 aa).

A zinc finger spans residues 3 to 34 (CPFCSATDTKVIDSRLVSDGHQVRRRRQCLAC). Residues 49–139 (PKVIKSNGNR…VYRSFEDIKE (91 aa)) form the ATP-cone domain.

This sequence belongs to the NrdR family. Requires Zn(2+) as cofactor.

In terms of biological role, negatively regulates transcription of bacterial ribonucleotide reductase nrd genes and operons by binding to NrdR-boxes. This is Transcriptional repressor NrdR from Aliivibrio salmonicida (strain LFI1238) (Vibrio salmonicida (strain LFI1238)).